The primary structure comprises 140 residues: Chromatin accessibility complex 16kD protein (140 aa).

The tract at residues 111-140 (LNRSAGSDDDDDDDDDDDEEESESESESDE) is disordered. Residues 117–140 (SDDDDDDDDDDDEEESESESESDE) are compositionally biased toward acidic residues.

As to quaternary structure, component of the chromatin accessibility complex (CHRAC), composed of Chrac-14, Chrac-16, Acf and Iswi. Forms a heterodimer with Chrac-14. The Chrac-14/Chrac-16 heterodimer interacts with Acf (via N-terminus). Stabilizes the interaction between Chrac-14 and Iswi.

The protein localises to the nucleus. In terms of biological role, histone-like protein which promotes nucleosome sliding of ATP-dependent nucleosome remodeling complexes. Part of the chromatin-accessibility complex (CHRAC) which uses energy/ATP to increase the general accessibility of DNA in chromatin. As a heterodimer with Chrac-14, binds DNA and facilitates nucleosome sliding by Acf. As part of the CHRAC complex, required for oogenesis. The protein is Chromatin accessibility complex 16kD protein of Drosophila melanogaster (Fruit fly).